Consider the following 649-residue polypeptide: DNA mismatch repair protein MutL (649 aa).

The protein belongs to the DNA mismatch repair MutL/HexB family.

Functionally, this protein is involved in the repair of mismatches in DNA. It is required for dam-dependent methyl-directed DNA mismatch repair. May act as a 'molecular matchmaker', a protein that promotes the formation of a stable complex between two or more DNA-binding proteins in an ATP-dependent manner without itself being part of a final effector complex. The protein is DNA mismatch repair protein MutL of Streptococcus pneumoniae (strain JJA).